The sequence spans 165 residues: Phosphopantetheine adenylyltransferase (165 aa).

S9 is a binding site for substrate. Residues 9-10 and H17 contribute to the ATP site; that span reads SF. Substrate contacts are provided by K41, I75, and R89. ATP is bound by residues 90 to 92, E100, and 125 to 131; these read GVR and YLFVRSD.

This sequence belongs to the bacterial CoaD family. In terms of assembly, homohexamer. Mg(2+) serves as cofactor.

It is found in the cytoplasm. The enzyme catalyses (R)-4'-phosphopantetheine + ATP + H(+) = 3'-dephospho-CoA + diphosphate. It participates in cofactor biosynthesis; coenzyme A biosynthesis; CoA from (R)-pantothenate: step 4/5. Reversibly transfers an adenylyl group from ATP to 4'-phosphopantetheine, yielding dephospho-CoA (dPCoA) and pyrophosphate. The protein is Phosphopantetheine adenylyltransferase of Borrelia hermsii (strain HS1 / DAH).